The following is a 261-amino-acid chain: Transcription antitermination protein NusB (261 aa).

The tract at residues 168–261 (ARVEDQPSDD…DLHKKDTTDD (94 aa)) is disordered. Positions 217–228 (VDTTSGNASDPE) are enriched in polar residues. The span at 242–261 (PTSKDHELATDLHKKDTTDD) shows a compositional bias: basic and acidic residues.

The protein belongs to the NusB family.

Functionally, involved in transcription antitermination. Required for transcription of ribosomal RNA (rRNA) genes. Binds specifically to the boxA antiterminator sequence of the ribosomal RNA (rrn) operons. This chain is Transcription antitermination protein NusB, found in Cutibacterium acnes (strain DSM 16379 / KPA171202) (Propionibacterium acnes).